We begin with the raw amino-acid sequence, 890 residues long: Wolframin (890 aa).

M1 bears the N-acetylmethionine mark. Over residues 1–20 (MNSGTPPPSPSGPPPPPAPQ) the composition is skewed to pro residues. The disordered stretch occupies residues 1-83 (MNSGTPPPSP…ETDRAGPMKA (83 aa)). The interaction with ATP6V1A stretch occupies residues 1–323 (MNSGTPPPSP…MHWLSTIVPT (323 aa)). Phosphothreonine is present on T30. S32 bears the Phosphoserine mark. Over residues 50–67 (PSAGRSAGEAAAPEPRAP) the composition is skewed to low complexity. Basic and acidic residues predominate over residues 71-83 (SREETDRAGPMKA). Residue S158 is modified to Phosphoserine. A disordered region spans residues 208–227 (VNEQDGGAQPGPVPKSLQKQ). 10 helical membrane-spanning segments follow: residues 314-334 (MHWLSTIVPTHHINALIFFFI), 340-360 (IDFFAFFIPLVVFYLSFVSMV), 402-422 (NHLEPYIHFLLSVVFVIFSFP), 427-447 (DCIPCSELAVISTFFTVTSYM), 465-485 (VAAGLLSLLPTVPVDWRFLKV), 496-516 (GHFIILNVSLPCLLYVYLFYL), 529-549 (TYCYLVPYLVCFMWCELSVVI), 563-583 (IGYFLFLFALPILVAGLALMG), 589-609 (RWFLSLDLTKIMVTTVICGVP), and 632-652 (SSMVKLILVWLTAILLFCWFY). The Lumenal portion of the chain corresponds to 653–869 (VYRSEGMKVY…HVKIEQDWRS (217 aa)). N663 and N748 each carry an N-linked (GlcNAc...) asparagine glycan. A helical transmembrane segment spans residues 870 to 890 (TVHGALKFAFDFFFFPFLSAA).

In terms of assembly, interacts with ATP6V1A. As to expression, highly expressed in the developing lens.

The protein localises to the endoplasmic reticulum membrane. The protein resides in the cytoplasmic vesicle. It is found in the secretory vesicle. Functionally, participates in the regulation of cellular Ca(2+) homeostasis, at least partly, by modulating the filling state of the endoplasmic reticulum Ca(2+) store. Negatively regulates the ER stress response and positively regulates the stability of V-ATPase subunits ATP6V1A and ATP1B1 by preventing their degradation through an unknown proteasome-independent mechanism. In Mus musculus (Mouse), this protein is Wolframin (Wfs1).